Here is a 538-residue protein sequence, read N- to C-terminus: Pentachlorophenol 4-monooxygenase (538 aa).

FAD is bound by residues 16–45 and 288–298; these read AVLI…MIDR and YRKGNVFLAGD.

This sequence belongs to the PheA/TfdB FAD monooxygenase family. Homodimer. FAD is required as a cofactor.

The catalysed reaction is pentachlorophenol + NADPH + O2 + H(+) = 2,3,5,6-tetrachloro-1,4-benzoquinone + chloride + NADP(+) + H2O. It carries out the reaction 2,3,5,6-tetrachlorophenol + NADPH + O2 = 2,3,5,6-tetrachlorohydroquinone + NADP(+) + H2O. It functions in the pathway xenobiotic degradation; pentachlorophenol degradation. Dechlorination of pentachlorophenol to tetrachlorobenzoquinone. Also removes hydrogen and nitro, amino, and cyano groups from benzene ring at the para position in relation to the hydroxyl of phenol. In Sphingobium chlorophenolicum, this protein is Pentachlorophenol 4-monooxygenase (pcpB).